The sequence spans 704 residues: Ubiquitin-like modifier-activating enzyme atg7 (704 aa).

Positions Gly-372–Gly-377 match the GXGXXG motif motif. Cys-555 (glycyl thioester intermediate) is an active-site residue. Residues Ala-660–Glu-699 form a homodimerization region. Positions Ala-682–Leu-704 are disordered. Residues Val-687–Leu-704 are compositionally biased toward acidic residues.

It belongs to the ATG7 family. Homodimer. Interacts with ATG8 through a thioester bond between Cys-555 and the C-terminal Gly of ATG8 and with ATG12 through a thioester bond between Cys-555 and the C-terminal Gly of ATG12. Also interacts with ATG3.

It localises to the cytoplasm. The protein localises to the preautophagosomal structure. E1-like activating enzyme involved in the 2 ubiquitin-like systems required for cytoplasm to vacuole transport (Cvt) and autophagy. Activates ATG12 for its conjugation with ATG5 and ATG8 for its conjugation with phosphatidylethanolamine. Both systems are needed for the ATG8 association to Cvt vesicles and autophagosomes membranes. Autophagy is essential for maintenance of amino acid levels and protein synthesis under nitrogen starvation. Required for selective autophagic degradation of the nucleus (nucleophagy) as well as for mitophagy which contributes to regulate mitochondrial quantity and quality by eliminating the mitochondria to a basal level to fulfill cellular energy requirements and preventing excess ROS production. Required for normal mycelial growth and conidiogenesis, and regulates sclerotial formation. Plays an essential role in pathogenesis. In Botryotinia fuckeliana (strain T4) (Noble rot fungus), this protein is Ubiquitin-like modifier-activating enzyme atg7.